A 691-amino-acid polypeptide reads, in one-letter code: Lipase 2 (691 aa).

The first 37 residues, 1 to 37, serve as a signal peptide directing secretion; it reads MLRGQEERKYSIRKYSIGVVSVLAATMFVVTSHEAQA. Residues 34–267 are disordered; it reads EAQASEKIPT…KPTDKNTDNK (234 aa). The propeptide occupies 38-296; that stretch reads SEKIPTTNAA…ADAKKVRPLK (259 aa). Residues 41-72 are compositionally biased toward polar residues; it reads IPTTNAAAQKETLNQPGEQGNAITSHQMQSGK. The span at 73–82 shows a compositional bias: basic and acidic residues; it reads QLDDMHKENG. 4 stretches are compositionally biased toward polar residues: residues 94–115, 125–135, 142–172, and 186–196; these read LQSS…NDNQ, SKQSHQNNATN, DQIQ…QPSI, and PTSTTPPSNDK. Composition is skewed to basic and acidic residues over residues 197-214 and 258-267; these read TAPK…KHPN and KPTDKNTDNK. Serine 413 functions as the Nucleophile in the catalytic mechanism. Glycine 580 contributes to the Ca(2+) binding site. The Charge relay system role is filled by aspartate 604. Aspartate 645 is a binding site for Ca(2+). Histidine 646 (charge relay system) is an active-site residue. Residues aspartate 648, aspartate 653, and aspartate 656 each contribute to the Ca(2+) site.

The protein belongs to the AB hydrolase superfamily. Lipase family.

The protein resides in the secreted. It carries out the reaction a triacylglycerol + H2O = a diacylglycerol + a fatty acid + H(+). This is Lipase 2 (lip2) from Staphylococcus aureus (strain MRSA252).